A 125-amino-acid chain; its full sequence is Hydrogenase maturation factor HypA (125 aa).

His-2 contributes to the Ni(2+) binding site. Zn(2+) is bound by residues Cys-73, Cys-76, Cys-96, and Cys-99.

It belongs to the HypA/HybF family.

Involved in the maturation of [NiFe] hydrogenases. Required for nickel insertion into the metal center of the hydrogenase. This Methanobrevibacter smithii (strain ATCC 35061 / DSM 861 / OCM 144 / PS) protein is Hydrogenase maturation factor HypA.